Reading from the N-terminus, the 510-residue chain is RNA-splicing ligase RtcB homolog (510 aa).

Mn(2+) contacts are provided by aspartate 124, cysteine 127, histidine 232, histidine 264, and histidine 358. 231–235 (NHYAE) lines the GMP pocket. GMP contacts are provided by residues 358–359 (HN), 407–410 (GGTM), serine 414, 433–436 (HGAG), and lysine 509. Catalysis depends on histidine 433, which acts as the GMP-histidine intermediate.

Belongs to the RtcB family. As to quaternary structure, catalytic component of the tRNA-splicing ligase complex. The cofactor is Mn(2+).

The catalysed reaction is a 3'-end 3'-phospho-ribonucleotide-RNA + a 5'-end dephospho-ribonucleoside-RNA + GTP = a ribonucleotidyl-ribonucleotide-RNA + GMP + diphosphate. It carries out the reaction a 3'-end 2',3'-cyclophospho-ribonucleotide-RNA + a 5'-end dephospho-ribonucleoside-RNA + GTP + H2O = a ribonucleotidyl-ribonucleotide-RNA + GMP + diphosphate + H(+). Functionally, catalytic subunit of the tRNA-splicing ligase complex that acts by directly joining spliced tRNA halves to mature-sized tRNAs by incorporating the precursor-derived splice junction phosphate into the mature tRNA as a canonical 3',5'-phosphodiester. May act as an RNA ligase with broad substrate specificity, and may function toward other RNAs. This chain is RNA-splicing ligase RtcB homolog, found in Trichoplax adhaerens (Trichoplax reptans).